Reading from the N-terminus, the 653-residue chain is Protein CBFA2T3 (653 aa).

Basic and acidic residues predominate over residues 1-10; that stretch reads MPASRLRDRA. Positions 1-109 are disordered; that stretch reads MPASRLRDRA…HTHREDGPAT (109 aa). A required for nucleolar targeting (in isoform 1) region spans residues 1 to 127; that stretch reads MPASRLRDRA…CLKWSMVCLL (127 aa). The segment at 1–430 is mediates interaction with PDE7A (in isoform 2); it reads MPASRLRDRA…RRCQEADREE (430 aa). The tract at residues 1 to 435 is mediates localization to the nucleus; the sequence is MPASRLRDRA…ADREELNHWA (435 aa). Over residues 11–23 the composition is skewed to low complexity; sequence ASSASGSTCGSMS. A compositionally biased stretch (pro residues) spans 75–86; the sequence is STPPSMPPPPPA. The segment at 145-242 is interaction with ZBTB33; that stretch reads PNGFSNGPAT…IPFLKANLPL (98 aa). Residues 171 to 266 form the TAFH domain; it reads ARQLSKLKRF…TPAQYLAQHE (96 aa). The tract at residues 176 to 268 is interaction with HIF1A; sequence KLKRFLTTLQ…AQYLAQHEQL (93 aa). Residues 284–342 form a disordered region; that stretch reads LLEVNENGKRRTPDRTKENGSDRDPLHPEHLSKRPCTLNPAQRYSPSNGPPQPTPPPHY. Over residues 289 to 315 the composition is skewed to basic and acidic residues; it reads ENGKRRTPDRTKENGSDRDPLHPEHLS. Residues 331–341 show a composition bias toward pro residues; the sequence is NGPPQPTPPPH. The segment at 394-412 is nervy homology region 2 (NHR2); essential for down-regulation of PFKFB3, PFKFB4 and PDK1 expression; the sequence is EEWKHLNNLLNCIMDMVEK. Over residues 434–446 the composition is skewed to basic and acidic residues; sequence WARRYSDAEDTKK. The disordered stretch occupies residues 434–472; sequence WARRYSDAEDTKKGPAPAAARPRSSSAGPEGPQLDVPRE. Over residues 447–462 the composition is skewed to low complexity; the sequence is GPAPAAARPRSSSAGP. Phosphoserine occurs at positions 457 and 459. Threonine 479 is modified (phosphothreonine). The segment at 485–506 is mediates interaction with PRKAR2A; sequence DIWRKAEEAVNEVKRQAMSELQ. Residues 485–533 form a nervy homology region 3 (NHR3); essential for down-regulation of PFKFB3, PFKFB4 and PDK1 expression region; the sequence is DIWRKAEEAVNEVKRQAMSELQKAVSDAERKAHELITTERAKMERALAE. Residues 488–543 adopt a coiled-coil conformation; the sequence is RKAEEAVNEVKRQAMSELQKAVSDAERKAHELITTERAKMERALAEAKRQASEDAL. The Zn(2+) site is built by cysteine 556, cysteine 559, cysteine 567, cysteine 570, cysteine 576, cysteine 580, histidine 588, and cysteine 592. An MYND-type zinc finger spans residues 556-592; sequence CWNCGRKASETCSGCNAARYCGSFCQHRDWEKHHHVC. The disordered stretch occupies residues 603-653; sequence VADPVPGPPEAAHSLGPSLPVGAASPSEAGSAGPSRPGSPSPPGPLDTVPR. Over residues 622 to 638 the composition is skewed to low complexity; it reads PVGAASPSEAGSAGPSR. Residues serine 637 and serine 641 each carry the phosphoserine modification. Threonine 650 is subject to Phosphothreonine.

The protein belongs to the CBFA2T family. In terms of assembly, homooligomer. Homotetramerization is mediated by nervy homology region 2 (NRH2). Can interact with RUNX1T1 and CBFA2T2; heterotetramerization between members of the CBFA2T family is proposed. Component of a TAL-1 complex composed at least of CBFA2T3, LDB1, TAL1 and TCF3. Interacts with ERBB4, HDAC1, HDAC2, HDAC3, HDAC6, HDAC8, NCOR1, NCOR2, and ZNF652. According to PubMed:12242670, may not interact with HDAC6. Interacts with PLXNA1, PLXNA3 and PRKAR1A. Isoform 2 interacts with PRKAR2A, PDE7A and probably PDE4A. Interacts with ZBTB4, ZBTB38 and ZBTB33. Interacts with HIF1A and EGLN1. Interacts with the AML1-MTG8/ETO fusion protein. As to expression, widely expressed with higher expression in heart, pancreas, skeletal muscle, spleen, thymus and peripheral blood leukocytes. Expressed in hematopoietic cells (at protein level).

Its subcellular location is the nucleus. The protein localises to the nucleolus. It localises to the nucleoplasm. It is found in the golgi apparatus membrane. Transcriptional corepressor which facilitates transcriptional repression via its association with DNA-binding transcription factors and recruitment of other corepressors and histone-modifying enzymes. Can repress the expression of MMP7 in a ZBTB33-dependent manner. Reduces the protein levels and stability of the transcriptinal regulator HIF1A; interacts with EGLN1 and promotes the HIF1A prolyl hydroxylation-dependent ubiquitination and proteasomal degradation pathway. Contributes to inhibition of glycolysis and stimulation of mitochondrial respiration by down-regulating the expression of glycolytic genes including PFKFB3, PFKFB4, PDK1, PFKP, LDHA and HK1 which are direct targets of HIF1A. Regulates the proliferation and the differentiation of erythroid progenitors by repressing the expression of TAL1 target genes. Plays a role in granulocyte differentiation. Its function is as follows. Isoform 2 functions as an A-kinase-anchoring protein. The chain is Protein CBFA2T3 (CBFA2T3) from Homo sapiens (Human).